Consider the following 437-residue polypeptide: Phosphoribosylamine--glycine ligase (437 aa).

The region spanning 109 to 316 (KDFLARHGIP…LLDLIEAALN (208 aa)) is the ATP-grasp domain. 135–196 (VRQQGAPIVI…EEYLDGEEAS (62 aa)) contacts ATP. Glu-286 and Asn-288 together coordinate Mg(2+).

Belongs to the GARS family. Requires Mg(2+) as cofactor. Mn(2+) serves as cofactor.

It catalyses the reaction 5-phospho-beta-D-ribosylamine + glycine + ATP = N(1)-(5-phospho-beta-D-ribosyl)glycinamide + ADP + phosphate + H(+). It functions in the pathway purine metabolism; IMP biosynthesis via de novo pathway; N(1)-(5-phospho-D-ribosyl)glycinamide from 5-phospho-alpha-D-ribose 1-diphosphate: step 2/2. The polypeptide is Phosphoribosylamine--glycine ligase (Xylella fastidiosa (strain 9a5c)).